We begin with the raw amino-acid sequence, 540 residues long: Chaperonin GroEL (540 aa).

ATP is bound by residues 29 to 32 (TLGP), 86 to 90 (DGTTT), glycine 413, 476 to 478 (NAA), and aspartate 492.

It belongs to the chaperonin (HSP60) family. Forms a cylinder of 14 subunits composed of two heptameric rings stacked back-to-back. Interacts with the co-chaperonin GroES.

The protein localises to the cytoplasm. It carries out the reaction ATP + H2O + a folded polypeptide = ADP + phosphate + an unfolded polypeptide.. Together with its co-chaperonin GroES, plays an essential role in assisting protein folding. The GroEL-GroES system forms a nano-cage that allows encapsulation of the non-native substrate proteins and provides a physical environment optimized to promote and accelerate protein folding. The polypeptide is Chaperonin GroEL (Streptococcus gordonii).